Consider the following 113-residue polypeptide: Death-associated protein-like 1.L (113 aa).

Residues 1–57 (MAKEQKMQSSPQALKAGHLPAVKAGGMRVSKKQGNEENSAPEKNAKKTLQEKPSSVL) form a disordered region.

This sequence belongs to the DAP-DAPL1 family. As to quaternary structure, associates with ribosomes; preventing translation. Interacts with eiF5a (eif5a and eif5a2); preventing translation.

Functionally, ribosome-binding protein that promotes ribosome hibernation, a process during which ribosomes are stabilized in an inactive state and preserved from proteasomal degradation. Acts via its association with eiF5a (eif5a and eif5a2) at the polypeptide exit tunnel of the ribosome, preventing mRNA translation. Plays a key role in ribosome hibernation in the mature egg by preventing mRNA translation, leading to ribosome inactivation. Ribosomes, which are produced in large quantities during oogenesis, are stored and translationally repressed in the egg and early embryo. The polypeptide is Death-associated protein-like 1.L (dapl1.L) (Xenopus laevis (African clawed frog)).